The primary structure comprises 150 residues: Heavy metal-associated isoprenylated plant protein 24 (150 aa).

Positions glutamine 26 to glutamate 89 constitute an HMA domain. Residues cysteine 37 and cysteine 40 each coordinate a metal cation. Residue cysteine 147 is modified to Cysteine methyl ester. Residue cysteine 147 is the site of S-farnesyl cysteine attachment. Residues alanine 148 to methionine 150 constitute a propeptide, removed in mature form.

The protein belongs to the HIPP family. Interacts with ZHD11/HB29.

In terms of biological role, heavy-metal-binding protein. This is Heavy metal-associated isoprenylated plant protein 24 from Arabidopsis thaliana (Mouse-ear cress).